Here is a 1215-residue protein sequence, read N- to C-terminus: Metabotropic glycine receptor (1215 aa).

Residues 1-23 form the signal peptide; the sequence is MGAMAYPLLLCLLLAQLGLGAVG. The interval 23–66 is disordered; the sequence is GASRDPQGRPDSPRERTPKGKPHAQQPGRASASDSSAPWSRSTD. Residues 24–417 are Extracellular-facing; it reads ASRDPQGRPD…CFVQEDKYLR (394 aa). Positions 28–40 are enriched in basic and acidic residues; the sequence is PQGRPDSPRERTP. The segment covering 52–64 has biased composition (low complexity); it reads ASASDSSAPWSRS. The interval 85-281 is cache-like region; the sequence is YLYTGDSHQL…CENGSYKPGW (197 aa). Asn98 and Asn143 each carry an N-linked (GlcNAc...) asparagine glycan. A disulfide bond links Cys99 and Cys272. Glycine is bound by residues Ser172 and Arg173. A glycan (N-linked (GlcNAc...) asparagine) is linked at Asn215. Glu271 is a binding site for glycine. N-linked (GlcNAc...) asparagine glycosylation is present at Asn274. Residue Asp307 coordinates glycine. A glycan (N-linked (GlcNAc...) asparagine) is linked at Asn333. A helical transmembrane segment spans residues 418-439; it reads LAIISFQALCMLLDFVSMLVVY. Residues 440-451 are Cytoplasmic-facing; the sequence is HFRKAKSIRASG. A helical membrane pass occupies residues 452–474; it reads LILLETILFGSLLLYFPVVILYF. The Extracellular segment spans residues 475-478; the sequence is EPST. A helical membrane pass occupies residues 479 to 501; the sequence is FRCILLRWARLLGFATVYGTVTL. An intrachain disulfide couples Cys481 to Cys573. Residues 502–525 lie on the Cytoplasmic side of the membrane; that stretch reads KLHRVLKVFLSRTAQRIPYMTGGR. The helical transmembrane segment at 526–547 threads the bilayer; it reads VMRMLAVILLVVFWFLIGWTSS. The Extracellular portion of the chain corresponds to 548-576; the sequence is VCQNLEKQISLIGQGKTSDHLIFNMCLID. A helical transmembrane segment spans residues 577–597; the sequence is RWDYMTAVAEFLFLLWGVYLC. Residues 598–611 lie on the Cytoplasmic side of the membrane; the sequence is YAVRTVPSAFHEPR. The chain crosses the membrane as a helical span at residues 612–633; sequence YMAVAVHNELIISAIFHTIRFV. Topologically, residues 634–642 are extracellular; that stretch reads LASRLQSDW. The helical transmembrane segment at 643 to 664 threads the bilayer; sequence MLMLYFAHTHLTVTVTIGLLLI. Residues 665–1215 lie on the Cytoplasmic side of the membrane; that stretch reads PKFSHSSNNP…KEEIWDSFKV (551 aa). 3 positions are modified to phosphoserine: Ser694, Ser705, and Ser708. Residues 757–999 are disordered; that stretch reads RITEIPETVS…LNPGTTQMKD (243 aa). 2 stretches are compositionally biased toward basic and acidic residues: residues 769–781 and 819–828; these read CSKE…DHGT and STYDHVRDQT. Lys774 participates in a covalent cross-link: Glycyl lysine isopeptide (Lys-Gly) (interchain with G-Cter in ubiquitin). Residue Ser865 is modified to Phosphoserine. The span at 925–943 shows a compositional bias: basic and acidic residues; it reads VEERTKSQKPLPKDKETNR. Ser946 is modified (phosphoserine). A compositionally biased stretch (polar residues) spans 979–998; sequence QRVNPTTANSDLNPGTTQMK. 2 short sequence motifs (VCPWE motif) span residues 1006–1010 and 1071–1075; these read VCPWE and VCLWE. Phosphoserine is present on Ser1080. The tract at residues 1117-1164 is disordered; the sequence is SEELPPKAVASKTENENLNQIGHQEKKTSSSEENVRGSYNSSNNFQQP. The span at 1139–1151 shows a compositional bias: basic and acidic residues; sequence HQEKKTSSSEENV. The segment covering 1153–1164 has biased composition (polar residues); it reads GSYNSSNNFQQP. A VCPWE motif 3 motif is present at residues 1171–1175; it reads VCPWE.

It belongs to the G-protein coupled receptor 3 family. Homodimer. Associates with the RGS7-GNB5 complex, promoting its localization to the cell membrane and regulating its GTPase activator activity. Interacts (via VCPWE motifs) with GNAO1. Interacts with GPC4. Interacts with EGFLAM.

It localises to the cell membrane. Its subcellular location is the postsynaptic cell membrane. It is found in the presynaptic cell membrane. The protein localises to the nucleus. Metabotropic receptor for glycine that controls synapse formation and function in the brain. Acts as an atypical G-protein coupled receptor that recruits and regulates the RGS7-GNB5 complex instead of activating G proteins. In absence of glycine ligand, promotes the GTPase activator activity of RGS7, increasing the GTPase activity of G protein alpha subunits, thereby driving them into their inactive GDP-bound form. Glycine-binding changes the conformation of the intracellular surface, inhibiting the GTPase activator activity of the RGS7-GNB5 complex, promoting G protein alpha subunits into their active GTP-bound form and regulating cAMP levels. Also able to bind taurine, a compound closely related to glycine, but with a two-fold lower affinity. Glycine receptor-dependent regulation of cAMP controls key ion channels, kinases and neurotrophic factors involved in neuronal excitability and synaptic transmission. Plays a pivotal role in regulating mood and cognition via its ability to regulate neuronal excitability in L2/L3 pyramidal neurons of the prefrontal cortex. Also involved in spatial learning by regulating hippocampal CA1 neuronal excitability. Acts as a synaptic organizer in the hippocampus, required for proper mossy fiber-CA3 neurocircuitry establishment, structure and function: induces presynaptic differentiation in contacting axons via its interaction with GPC4. In addition to glycine, may also act as a receptor for osteocalcin (BGLAP) hormone: osteocalcin-binding initiates a signaling response that prevents neuronal apoptosis in the hippocampus and regulates the synthesis of neurotransmitters. In Homo sapiens (Human), this protein is Metabotropic glycine receptor.